The primary structure comprises 213 residues: MAGRHALVWLREDAQWQAVTSGAQPRLQQWFAAGLPAVVARGDGSQAPGTLRLGVPLPPSEGKQRLALQAHVAGIARCTAPLTLDAVMPHAPLAVQPALQALLAQAHAHALHPHVFGSFAWQALTGLTYVHAQSDLDLLWSIQTPEQACAVLTLVQRWEQQHGLRADGELRLPDDNAVNWREYAGNAQQVLVKSNQDCRLLPRAALFPARSAA.

Active-site residues include D135 and D137.

The protein belongs to the MdcG family.

It catalyses the reaction apo-[malonate decarboxylase ACP] + 2'-(5''-triphospho-alpha-D-ribosyl)-3'-dephospho-CoA = holo-[malonate decarboxylase ACP] + diphosphate. In terms of biological role, transfers 2'-(5-triphosphoribosyl)-3'-dephosphocoenzyme-A to the apo-[acyl-carrier-protein] of the malonate decarboxylase to yield holo-[acyl-carrier-protein]. The polypeptide is Phosphoribosyl-dephospho-CoA transferase (Xanthomonas axonopodis pv. citri (strain 306)).